Consider the following 377-residue polypeptide: 1,3,6,8-tetrahydroxynaphthalene synthase (377 aa).

The active site involves Cys164.

It belongs to the thiolase-like superfamily. Chalcone/stilbene synthases family. Homodimer.

It catalyses the reaction 5 malonyl-CoA + 5 H(+) = naphthalene-1,3,6,8-tetrol + 5 CO2 + 5 CoA + H2O. The protein operates within pigment biosynthesis; melanin biosynthesis. Functionally, involved in the biosynthesis of melanin but also various secondary metabolites containing a naphthoquinone ring. Catalyzes the iterative condensation of five CoA-linked malonyl units to form a pentaketide intermediate. THNS subsequently catalyzes the dual intramolecular Claisen and aldol condensations of this linear intermediate to produce the fused ring of 1,3,6,8-tetrahydroxynaphthalene (THN). In Streptomyces peucetius subsp. caesius, this protein is 1,3,6,8-tetrahydroxynaphthalene synthase.